A 273-amino-acid chain; its full sequence is MMIAAAGTRPQRAEGRGHLAAKLLDGRTRLRELYQEGAAKIRLPDTFDASMEAVIINTAGGLTGGDRMDWSVEAGAGTRIDVTTQACEKIYKASAGTAEVRTSIKVGTQARVDWLPQETILFDRSALFRRLDVDLDESAEFLAVEAILLGRKAMGETVMTGLFRDRWRIRRSGRLIHAEELRLSEGVAALAARQAVLGGQVAFATLLYAGPLAEAYLGKVRPLVEGAMGGASAWDGKLVVRLAAADGFSLRKILIRVISALRNGAPVPKVWNL.

It belongs to the UreD family. As to quaternary structure, ureD, UreF and UreG form a complex that acts as a GTP-hydrolysis-dependent molecular chaperone, activating the urease apoprotein by helping to assemble the nickel containing metallocenter of UreC. The UreE protein probably delivers the nickel.

The protein localises to the cytoplasm. In terms of biological role, required for maturation of urease via the functional incorporation of the urease nickel metallocenter. This Rhizobium leguminosarum bv. trifolii (strain WSM2304) protein is Urease accessory protein UreD.